We begin with the raw amino-acid sequence, 2605 residues long: MLGHRDFTTLPLSRREFLLFGPLALSFDQAAFEHLRKTIVNSEEHRWALEVLGSLPQYYATIVNAFPGINGRNEVQLEDLKGALHSGKPLATSFPLPNTLLIPLVMVLHLTEYSRFLQEISEELESGIDLFDASRHNKETVGFCTGLLSAMAVSSAGSREDFRKYAAVAVRLGLLVGVVVDSHDISSAQGPSKSISASWNSAQKREDARRIMDEFPQAYISVYYDEDRATITAPASEISDLHRRLRASGIVTAEIGLNGCFHADCYLDQLDPIIQFCDSQPDFQLPDASKVVIPTRSNATGELIRDGALHQHALRSILVEPPQWFESFTAVRDACAEDEGAIIFSFGPERCVPPSLLRVLSQKVVTVEDLDVLKRYQYSYSENDIAVVGMSCKVAGANNLEEFWDLLCTGKSQHREVPKERFSFETVFRDVDSKRKWFGNFIDGHDQFDHKFFKKSPRESATMDPQQRHLLQIAYQAVEQSGYFHSANPDRQIGCYMGVCACDYENNIACHAPNAFSATGNLQGFIAGKVSHFFGWTGPGLTIDTACSSSAVAVHQACKAIITGECTAALAGGTHVMTNPLWFQNLAGASFLSTTGQCKPFDAKADGYCRGEGIATVFLKKLSAAVADGDQILGVITATAVQQNQNCTPIFVPNVPSLSDLFRVVVKQSRLQPSDVTVVEAHGTGTAVGDPAEYDSIRSVLGGSSREKTLALSSVKGLVGHIECTSGIVSLIKVLLMLQKRMIPPQASFTTINPAIKATPADKINIPTTVKTWDAEFCAALINNYGASGSNASIVVTQPPVGTVKPSAETSGLKYPFRFCGMDEQSLRRYSKIFRQFLNRKSYSAQDLSLRNISFNVNRQSNRQLDRTLLFSVKTLEELEQKLVTFENDNDSITSLALPKSKPVVLCFGGQVSTFVGLDRTVYERVAILRKHLHTVDAVARSIGLKSIFPRIFETTPVSDTVHLQIMLFASQYACARSWIDSGIQPVAVVGHSFGELTSLCVSQSLSLEDAVKMIAARATLIRDAWGPEKGAMLAVEADLEDVQKLLAESSAGCQDVQPATIACYNGPRSFTLAGAVAAIDAVAEALATPAFSSMKNKRLNVTNAFHCALVDPLLDRLEESARELTFRAPVIPVQRATEYQTEELPTSRFVADHIRSPVFFNHAIHRLADKYPSCVFLEAGSNSTVTNMASRALGNPSSSHFQAINITSHNGWNNLVDATMNMWKSGLGVHFWAHQPSQTKEYALLLLPPYQFEPSRHWIELKNPPKLTAAPAIEEVKKEEAKVPNTLLTFVGYQDSERQQARFRVNTMIPKYDKLIRGHIIAQTAPICPATVQLDLVIESIRSIRPELASTEHEPQIHAVENLAPICVNPLRAVWVEVTADDVAQGTSWNFQVYSDDLQNGFSKTIHTTGRVIFRSISDVSLKYEFARFERHFRHQTCVELMRGGEVDEVLQNRNIYKMFAEIVDYGEDYRGLQKLVSKGNQSAGYVVKKYNPESWLDGHLADSFCQVGGIYVNCMTDRVPNDMFIANGIEQWMRSPKMRQQDPRPESYHVLATHHRPSDKAFLTDVFAFDSTTGVLIEVILGISYVKIPKASMSKLLSRLTVNDSASCPTNMPLLSKSASVNLFDAPENLSTPSLSVAPTQQSAPALSLSKVKKVKNDGPDKGQLTQRIKSILAELSGLEIAEIKDDSELADLGIDSLMGMEMAHEIEKAFTISLPESDLMEVVDVPSLIKCVRKAMSGDADSAEYTTEQSTSEAADSDDKSTNYTTPSTPGEEALDMDKSMREFLGKEGTELNLPFETVMKAFNETKNMTDDRIAEYQQTRYVESVLPMQSQMCVSLVLEAFDQLNMRIRTAPAGEKFTRISHPKEHTRLVDYLYKMLEDASLINIDGEVITRTAIQVPRPSKEIFDELVSQHPDQNAADKLTFYTGSHLAEVLKGETDGIKLIFGTQDGRELVSKLYRDWPLNRLFYRQMEDFLERLTSKLDISQGVIKILEMGAGTGGTTKWLVPLLAKLNIPVEYTFTDIAPSFVAAARKKFSKQYPFMKFRTHDIEKAPADDLIGSQHVIIASNAVHATHSLSESGKNIRKALRPDGVLLMLEMTGTLHWVDIIFGLFEGWWYFDDGRTHAVTHESRWAKDLQAVGYGHVDWTDGVRPENKLEKLIIAFASGGRYERLHIPRPLESASADCAARQAVVDRYVQEMTAGFGAATGVSPSAPLAHQEPKGCCVLVTGATGSLGCHLLAALTSLPTIASVVCLNRRSRQDPLERQHRSLLEKKIFLSEETAARVRVIETDMSKPQLGLLEEEYNYLLNSVTHIVHNAWLMNAKLPLRRFEPQLQIMRNLLDLAYGISLQRPMEKVSFQFISSIATVGHWPIWTGKSSVPEERMAIESVLPTGYGDAKYICERMIDETLHKYPDRFRAMVVRPGQVAGSSTSGYWNTMEHFSFLVKSSQTLNALPDFDGVLSWTPVDVVASTLVDLLLLPEDKTPYSIYHIDNPVRQPWKEMNVVLADALHIPRSNIIPFEKWIQRVKDYPRQVEGAEGDNPAILLVDFLDNNFIRMSCGGLLLETKKSREHSKTLANLGPVSAETARLFIKSWIDMGFLSP.

The tract at residues 97-243 (PNTLLIPLVM…PASEISDLHR (147 aa)) is N-terminal acylcarrier protein transacylase domain (SAT). The Nucleophile; for transacylase activity role is filled by C144. The active-site Proton donor/acceptor; for transacylase activity is the H262. The 417-residue stretch at 382–798 (ENDIAVVGMS…GSNASIVVTQ (417 aa)) folds into the Ketosynthase family 3 (KS3) domain. Catalysis depends on for beta-ketoacyl synthase activity residues C547, H682, and H721. The interval 908 to 1195 (FGGQVSTFVG…VTNMASRALG (288 aa)) is malonyl-CoA:ACP transacylase (MAT) domain. Residues 1285–1420 (PNTLLTFVGY…GRVIFRSISD (136 aa)) are N-terminal hotdog fold. Residues 1285–1596 (PNTLLTFVGY…YVKIPKASMS (312 aa)) form the PKS/mFAS DH domain. The segment at 1316 to 1594 (LIRGHIIAQT…ISYVKIPKAS (279 aa)) is product template (PT) domain. The Proton acceptor; for dehydratase activity role is filled by H1320. Residues 1447–1596 (EVDEVLQNRN…YVKIPKASMS (150 aa)) form a C-terminal hotdog fold region. The active-site Proton donor; for dehydratase activity is D1504. The 75-residue stretch at 1665 to 1739 (GQLTQRIKSI…SLIKCVRKAM (75 aa)) folds into the Carrier domain. Residue S1699 is modified to O-(pantetheine 4'-phosphoryl)serine. The disordered stretch occupies residues 1742–1780 (DADSAEYTTEQSTSEAADSDDKSTNYTTPSTPGEEALDM). The segment covering 1747–1757 (EYTTEQSTSEA) has biased composition (polar residues). The interval 1963-2151 (DWPLNRLFYR…VGYGHVDWTD (189 aa)) is methyltransferase domain. The NADPH-binding (R) domain stretch occupies residues 2230–2473 (VTGATGSLGC…LSWTPVDVVA (244 aa)).

It carries out the reaction 4 malonyl-CoA + acetyl-CoA + AH2 + S-adenosyl-L-methionine + 3 H(+) = 2,4-dihydroxy-3-methyl-6-(2-oxopropyl)benzaldehyde + A + S-adenosyl-L-homocysteine + 4 CO2 + 5 CoA + H2O. The protein operates within secondary metabolite biosynthesis. Functionally, non-reducing polyketide synthase; part of the gene cluster that mediates the biosynthesis of the antibiotic 2,4-dihydroxy-3-methyl-6-(2-oxopropyl)benzaldehyde (DHMBA) and its derivatives. The direct non-reducing polyketide synthase dbaI product is 2,4-dihydroxy-3-methyl-6-(2-oxopropyl)benzaldehyde (DHMBA), produced by condensation of one acetyl-CoA starter unit with 4 malonyl-CoA units and one methylation step. The FAD-dependent monooxygenase dbaH is responsible for the synthesis of yellow pigments derived from the oxidation of DHMBA. The roles of dbaB, C, E and F have still to be determined. This is Non-reducing polyketide synthase dbaI from Emericella nidulans (strain FGSC A4 / ATCC 38163 / CBS 112.46 / NRRL 194 / M139) (Aspergillus nidulans).